The chain runs to 327 residues: Glycerol-3-phosphate dehydrogenase [NAD(P)+] (327 aa).

NADPH-binding residues include phenylalanine 13, arginine 34, and lysine 107. Residues lysine 107 and glycine 135 each coordinate sn-glycerol 3-phosphate. NADPH is bound at residue alanine 139. The sn-glycerol 3-phosphate site is built by lysine 190, aspartate 243, serine 253, arginine 254, and asparagine 255. The active-site Proton acceptor is lysine 190. Arginine 254 contacts NADPH. Valine 276 and glutamate 277 together coordinate NADPH.

It belongs to the NAD-dependent glycerol-3-phosphate dehydrogenase family.

It localises to the cytoplasm. It catalyses the reaction sn-glycerol 3-phosphate + NAD(+) = dihydroxyacetone phosphate + NADH + H(+). The enzyme catalyses sn-glycerol 3-phosphate + NADP(+) = dihydroxyacetone phosphate + NADPH + H(+). It participates in membrane lipid metabolism; glycerophospholipid metabolism. Its function is as follows. Catalyzes the reduction of the glycolytic intermediate dihydroxyacetone phosphate (DHAP) to sn-glycerol 3-phosphate (G3P), the key precursor for phospholipid synthesis. In Rhizobium johnstonii (strain DSM 114642 / LMG 32736 / 3841) (Rhizobium leguminosarum bv. viciae), this protein is Glycerol-3-phosphate dehydrogenase [NAD(P)+].